The following is a 1141-amino-acid chain: Eukaryotic translation initiation factor 3 subunit A (1141 aa).

In terms of domain architecture, PCI spans 319–501 (LQRMAAHVLL…NSIYFGTDLT (183 aa)). 2 stretches are compositionally biased toward basic and acidic residues: residues 588 to 623 (QNNA…EERE) and 829 to 899 (AAEE…RGGD). Disordered stretches follow at residues 588–631 (QNNA…QNEI) and 829–1141 (AAEE…VKRR). A Phosphoserine modification is found at Ser908. Composition is skewed to basic and acidic residues over residues 920–976 (ERND…EPDT), 990–1051 (SRDD…EPQR), 1059–1087 (DAPR…RGDQ), and 1110–1131 (TREE…KAGD).

The protein belongs to the eIF-3 subunit A family. In terms of assembly, component of the eukaryotic translation initiation factor 3 (eIF-3) complex. The eIF-3 complex interacts with pix.

It localises to the cytoplasm. RNA-binding component of the eukaryotic translation initiation factor 3 (eIF-3) complex, which is involved in protein synthesis of a specialized repertoire of mRNAs and, together with other initiation factors, stimulates binding of mRNA and methionyl-tRNAi to the 40S ribosome. The eIF-3 complex specifically targets and initiates translation of a subset of mRNAs involved in cell proliferation. The polypeptide is Eukaryotic translation initiation factor 3 subunit A (Drosophila simulans (Fruit fly)).